A 352-amino-acid chain; its full sequence is NAD(P)H pyrophosphatase NUDT13, mitochondrial (352 aa).

The N-terminal 20 residues, 1 to 20, are a transit peptide targeting the mitochondrion; the sequence is MSLYCGIACRRKFFWCYRLL. A Nudix hydrolase domain is found at 196-323; the sequence is PQMAPVAITL…PYTQQQNGTF (128 aa). The Nudix box motif lies at 216-240; the sequence is RQSSFPKGMYSALAGFCDIGESVEE.

Belongs to the Nudix hydrolase family. It depends on Mg(2+) as a cofactor. Requires Mn(2+) as cofactor. In terms of tissue distribution, highly expressed in metastasis-suppressed chromosome 6 melanoma hybrids.

It localises to the mitochondrion. It carries out the reaction NADH + H2O = reduced beta-nicotinamide D-ribonucleotide + AMP + 2 H(+). The catalysed reaction is NAD(+) + H2O = beta-nicotinamide D-ribonucleotide + AMP + 2 H(+). The enzyme catalyses NADPH + H2O = reduced beta-nicotinamide D-ribonucleotide + adenosine 2',5'-bisphosphate + 2 H(+). NAD(P)H pyrophosphatase that hydrolyzes NADH into NMNH and AMP, and NADPH into NMNH and 2',5'-ADP. Has a marked preference for the reduced pyridine nucleotides. Does not show activity toward NAD-capped RNAs; the NAD-cap is an atypical cap present at the 5'-end of some RNAs. This is NAD(P)H pyrophosphatase NUDT13, mitochondrial from Homo sapiens (Human).